The sequence spans 199 residues: MADPGVPGRYESGTGNLGVKEAAGPGGALVELTPTPGGLALVSPYHTHRVGDPLDLVALAEQVQKADEFIRANATNKLTVIAEQIQHLQEQARKVLEDARRDADLHHAACNMVKKPGNIYYLYQRESGQQYFSIISPEEWGTGCPHDFLGAYKLQHDMSWTPYEDVEKQDAKIGMMDKLLSQPMALPPCTEPTFQGLPH.

Residues 71-104 (RANATNKLTVIAEQIQHLQEQARKVLEDARRDAD) are a coiled coil.

This is an uncharacterized protein from Mus musculus (Mouse).